The sequence spans 927 residues: Disks large homolog 1 (927 aa).

The 61-residue stretch at 4–64 folds into the L27 domain; sequence RKQDTQRALH…FYEVTLLDNP (61 aa). A Phosphothreonine modification is found at threonine 115. 3 positions are modified to phosphoserine: serine 122, serine 138, and serine 158. An interaction with SH3 domains region spans residues 162–212; that stretch reads PTEAVPPSSPTVPVIPVLPVPAENTVILPTIPQANPPPVLVNTDSLETSTY. The required for interaction with MARCHF2 stretch occupies residues 224–546; that stretch reads EITLERGNSG…QAVTIVAQYR (323 aa). 3 PDZ domains span residues 230-317, 325-412, and 474-555; these read GNSG…SEKI, GPKG…YMND, and TGLG…RFEA. Serine 232 is modified (phosphoserine). Tyrosine 399 is subject to Phosphotyrosine. A phosphoserine mark is found at serine 568, serine 573, serine 575, serine 579, serine 598, serine 619, serine 707, serine 710, and serine 857. Residues 581–651 form the SH3 domain; that stretch reads KRSLYVRALF…PSKRRVEKKE (71 aa). Residues 683–858 enclose the Guanylate kinase-like domain; sequence RKFPFYKNKD…ISIFIKPKSM (176 aa). Residues 691-719 are disordered; that stretch reads KDQSEQETSDADQHITSNASDSESSYRGQ. Residues 704–717 show a composition bias toward polar residues; sequence HITSNASDSESSYR.

This sequence belongs to the MAGUK family. As to quaternary structure, homotetramer. Interacts (via guanylate kinase-like domain) with DLGAP1, DLGAP2, DLGAP3, DLGAP4 and MAP1A. Interacts (via guanylate kinase-like domain) with KIF13B. May interact with HTR2A. Interacts (via PDZ domains) with GRIA1. Interacts (via PDZ domains) with GRIN2A. Interacts (via PDZ domains) with KCND2 and KCND3. Interacts (via PDZ domains) with KCNA1, KCNA2, KCNA3 and KCNA4. Interacts (via PDZ domains) with ADGRA3. Interacts with KCNF1. Interacts with CAMK2. Interacts with cytoskeleton-associated protein EPB41. Interacts with cytoskeleton-associated protein EZR. Found in a complex with KCNA5 and CAV3. Found in a complex with APC and CTNNB1. Interacts (via PDZ domains) with APC. Interacts with CDH1 through binding to PIK3R1. Forms multiprotein complexes with CASK, LIN7A, LIN7B, LIN7C, APBA1, and KCNJ12. Interacts with TOPK. Forms a tripartite complex composed of DLG1, MPP7 and LIN7 (LIN7A or LIN7C). May interact with TJAP1. Interacts with PTEN. Interacts with FRMPD4 (via C-terminus). Interacts with LRFN1, LRFN2 and LRFN4. Interacts with SFPQ. Interacts (via PDZ domains) with ADGRA2 (via PDZ-binding motif). Interacts with ADAM10; this interaction recruits ADAM10 to the cell membrane during long-term depression in hippocampal neurons. Interacts with DGKI (via PDZ-binding motif). Interacts (via PDZ domains) with MARCHF2 (via PDZ domain); the interaction leads to DLG1 ubiqtuitination and degradation. Interacts (via N-terminus) with MPP3; this interaction connects CADM1 with DLG1 and links CADM1 with the regulatory subunit of phosphoinositide-3-kinase (PI3K) by forming a multiprotein complex and participates in cell spreading. Phosphorylated by MAPK12. Phosphorylation of Ser-232 regulates association with GRIN2A. Post-translationally, ubiquitinated; by MARCHF2 which results in its degradation.

Its subcellular location is the cell membrane. The protein localises to the basolateral cell membrane. It localises to the endoplasmic reticulum membrane. The protein resides in the postsynaptic density. It is found in the synapse. Its subcellular location is the sarcolemma. The protein localises to the apical cell membrane. It localises to the cell junction. The protein resides in the cytoplasm. Its function is as follows. Essential multidomain scaffolding protein required for normal development. Recruits channels, receptors and signaling molecules to discrete plasma membrane domains in polarized cells. Promotes epithelial cell layer barrier function via maintaining cell-cell adhesion. May also play a role in adherens junction assembly, signal transduction, cell proliferation, synaptogenesis and lymphocyte activation. Regulates the excitability of cardiac myocytes by modulating the functional expression of Kv4 channels. Functional regulator of Kv1.5 channel. During long-term depression in hippocampal neurons, it recruits ADAM10 to the plasma membrane. The chain is Disks large homolog 1 (DLG1) from Canis lupus familiaris (Dog).